Consider the following 155-residue polypeptide: UPF0461 protein C5orf24 homolog (155 aa).

A compositionally biased stretch (polar residues) spans 60-69 (NETHLQTSTS). Residues 60-155 (NETHLQTSTS…QQALMCSSDA (96 aa)) are disordered. The segment covering 78 to 92 (LKKKKNVGRSGKRGR) has biased composition (basic residues). Over residues 94–107 (SGTTKSAGYRTSTG) the composition is skewed to polar residues.

This sequence belongs to the UPF0461 family.

In Xenopus laevis (African clawed frog), this protein is UPF0461 protein C5orf24 homolog.